We begin with the raw amino-acid sequence, 347 residues long: Protein RecA (347 aa).

67 to 74 (GPESSGKT) serves as a coordination point for ATP.

It belongs to the RecA family.

It localises to the cytoplasm. Its function is as follows. Can catalyze the hydrolysis of ATP in the presence of single-stranded DNA, the ATP-dependent uptake of single-stranded DNA by duplex DNA, and the ATP-dependent hybridization of homologous single-stranded DNAs. It interacts with LexA causing its activation and leading to its autocatalytic cleavage. This is Protein RecA from Helicobacter acinonychis (strain Sheeba).